The chain runs to 451 residues: Protoheme IX farnesyltransferase, mitochondrial (451 aa).

Transmembrane regions (helical) follow at residues 149-169 (TILV…PATV), 240-260 (PTVA…YTSL), 265-285 (IINT…GWAA), 289-309 (LTHP…FPHF), 339-359 (VALR…YFNI), and 414-434 (KAFF…ILHK).

Belongs to the UbiA prenyltransferase family.

Its subcellular location is the mitochondrion membrane. Functionally, converts protoheme IX and farnesyl diphosphate to heme O. This is Protoheme IX farnesyltransferase, mitochondrial (COX10) from Candida glabrata (strain ATCC 2001 / BCRC 20586 / JCM 3761 / NBRC 0622 / NRRL Y-65 / CBS 138) (Yeast).